Here is a 68-residue protein sequence, read N- to C-terminus: ATP synthase F(0) complex subunit 8 (68 aa).

A helical transmembrane segment spans residues 8-24 (VWPTIITSMLLTLFLLM). K54 is subject to N6-acetyllysine; alternate. Residue K54 is modified to N6-succinyllysine; alternate. K57 is subject to N6-acetyllysine.

It belongs to the ATPase protein 8 family. As to quaternary structure, component of the ATP synthase complex composed at least of ATP5F1A/subunit alpha, ATP5F1B/subunit beta, ATP5MC1/subunit c (homooctomer), MT-ATP6/subunit a, MT-ATP8/subunit 8, ATP5ME/subunit e, ATP5MF/subunit f, ATP5MG/subunit g, ATP5MK/subunit k, ATP5MJ/subunit j, ATP5F1C/subunit gamma, ATP5F1D/subunit delta, ATP5F1E/subunit epsilon, ATP5PF/subunit F6, ATP5PB/subunit b, ATP5PD/subunit d, ATP5PO/subunit OSCP. ATP synthase complex consists of a soluble F(1) head domain (subunits alpha(3) and beta(3)) - the catalytic core - and a membrane F(0) domain - the membrane proton channel (subunits c, a, 8, e, f, g, k and j). These two domains are linked by a central stalk (subunits gamma, delta, and epsilon) rotating inside the F1 region and a stationary peripheral stalk (subunits F6, b, d, and OSCP). Interacts with PRICKLE3.

It is found in the mitochondrion membrane. Its function is as follows. Subunit 8, of the mitochondrial membrane ATP synthase complex (F(1)F(0) ATP synthase or Complex V) that produces ATP from ADP in the presence of a proton gradient across the membrane which is generated by electron transport complexes of the respiratory chain. ATP synthase complex consist of a soluble F(1) head domain - the catalytic core - and a membrane F(1) domain - the membrane proton channel. These two domains are linked by a central stalk rotating inside the F(1) region and a stationary peripheral stalk. During catalysis, ATP synthesis in the catalytic domain of F(1) is coupled via a rotary mechanism of the central stalk subunits to proton translocation. In vivo, can only synthesize ATP although its ATP hydrolase activity can be activated artificially in vitro. Part of the complex F(0) domain. This chain is ATP synthase F(0) complex subunit 8, found in Symphalangus syndactylus (Siamang).